A 110-amino-acid polypeptide reads, in one-letter code: ATP-dependent Clp protease adapter protein ClpS (110 aa).

The protein belongs to the ClpS family. Binds to the N-terminal domain of the chaperone ClpA.

Functionally, involved in the modulation of the specificity of the ClpAP-mediated ATP-dependent protein degradation. The chain is ATP-dependent Clp protease adapter protein ClpS from Bartonella henselae (strain ATCC 49882 / DSM 28221 / CCUG 30454 / Houston 1) (Rochalimaea henselae).